Here is a 1423-residue protein sequence, read N- to C-terminus: MTSSVRLAFLATLLLLLPLEAQIQQANSANVNQNVGQQDTGTLFTGTGTNLYYGVNLVPFGPEVGDQEVNPGLLTAGQTIDLHMYFPFYGGLYNYSTLSVNGYIGFATVLDQGPTLNVGPDMTDWPRHEDPAMIAPYLCKQQIPQNLNPGMRSGVFYRLMMRQSLFGRQTGSNMNMGQATYQSSFFGQSASKACPGTPDSYVRCDSQADYFLEEMQRWLIEGVAGAAAFRADAALVVTWYNTASAISGRSDIDSGQLATYQAIWLTDRTARLSYVILNYDRLGFDAADFRQNSRSGRCQALFNGGNHTGLVPVDPTQDFKNTPKVLAQRSGVPQMVRGRYMFRVDDVVRPAGCSNKTGGTYPMLIYPNIVNMLGEMTVDVNAICLDKSQTYILMIEQRQTATCTVLTSAIARCNLPKIFDWGTKTVYFQPQSGGANDEKAFVGYIYFVPPTLDPMRLDIGNVYDWFKNPLPYTTMPLVWYPRNFTNPEMTQHMDQVRMNDDTLYSTQLGLYVIAYREYKDDTIKKFRPEHRVICRLATYSNRNTYEYRWKPQEERINLYQVEQWYMNDWERQNDLYHYRFGYLKLAPLKTNQEQNPQQLLSGLVSSPISLHFLWTSNNPQFATTTYSQQDESARTEYVKKKSLEMCHDWYDEDGAQWNFIRDTETNSSCPCIERQAIADIGRFMPHPRCSQAFRDITCTTSIGSRNCYMSSQNVMTTYAGDGRQYNENLARFPTHYGQVCCYDDQGHLMQTSYQPVIKVTPEVPYNPGFPMRAYEFGTAPYMGQYEVPGLSAFHNDYMPYFLCCKFADFRCQMFYWRRPSSGCQEYQPPAYGEVMGAGTFNTIDNDKFIFNEPGVYNGLYIPHTLSTPEVKVQIRMERYPNRRVDFSLLGRYMAQQDLVQPTNATVVTGVVLEATGTDRVHVVARKDTRRFRYRTSIIVGNILRYFDTMRIQRFKGVMIYVNNVERGQPEIYVVLEEAQIGIRVRESYAIDIDRLSEYQESMGILNIAVSVPPQYGVRPDGDKTREQEIRQRYNLPRVSGVFRPFPDQSSGSYLNTLTLNDVNSETYRQQIINMYRVQGSGEPGSDQNINNQGNNYGMPTENMFTTSRDEDKKFEVFPEAQMKSGPIFKTSPKYETGAYRFYPMTGQVLNQRLQTCRDMQQNTNINMQPLQSQLTGEYGQTQCPDNPSSIIQDCGDSVPCLYDYYNFNAKLLGLNVKNEWNTFTSDRFDASRQYNSCGVINIEYPEYLMKTSSMSSAYLQGDVARFECFQSHWIYGVHEYKCGIVVDRNQRNIIDPRDYRFEWNKGEQPWCRSREKQNFLTWLAIIGGIFGVLVFVILIFLCCWIVKQKKKGEAAERRGYDMASRSSMTGSRGGKKYPIHESEPLNEKRFDADTYRDDDFYPPAREEQYAARNEDLHGLKTSV.

A signal peptide spans 1 to 28 (MTSSVRLAFLATLLLLLPLEAQIQQANS). At 29-1321 (ANVNQNVGQQ…RSREKQNFLT (1293 aa)) the chain is on the extracellular side. N-linked (GlcNAc...) asparagine glycans are attached at residues asparagine 94, asparagine 306, asparagine 355, asparagine 483, asparagine 666, and asparagine 903. Residues 184–347 (SFFGQSASKA…GRYMFRVDDV (164 aa)) form the NIDO domain. The AMOP domain occupies 638 to 818 (VKKKSLEMCH…FRCQMFYWRR (181 aa)). Residues 1322 to 1342 (WLAIIGGIFGVLVFVILIFLC) form a helical membrane-spanning segment. Residues 1343-1423 (CWIVKQKKKG…EDLHGLKTSV (81 aa)) lie on the Cytoplasmic side of the membrane. The segment at 1364–1401 (SRSSMTGSRGGKKYPIHESEPLNEKRFDADTYRDDDFY) is disordered. Residues 1378–1401 (PIHESEPLNEKRFDADTYRDDDFY) are compositionally biased toward basic and acidic residues.

The protein resides in the membrane. This is an uncharacterized protein from Caenorhabditis elegans.